The chain runs to 348 residues: D-alanine--D-alanine ligase (348 aa).

An ATP-grasp domain is found at 132–334; sequence KRILEVAGVP…YSDLIKELVV (203 aa). Residue 162–217 coordinates ATP; it reads LEKLTFPVFVKPANMGSSVGISKAENESELRSAIDLALKYDSRILIEQGVVAREIE. 3 residues coordinate Mg(2+): aspartate 288, glutamate 301, and asparagine 303.

This sequence belongs to the D-alanine--D-alanine ligase family. It depends on Mg(2+) as a cofactor. The cofactor is Mn(2+).

The protein localises to the cytoplasm. The enzyme catalyses 2 D-alanine + ATP = D-alanyl-D-alanine + ADP + phosphate + H(+). The protein operates within cell wall biogenesis; peptidoglycan biosynthesis. Its function is as follows. Cell wall formation. In Streptococcus thermophilus (strain ATCC BAA-491 / LMD-9), this protein is D-alanine--D-alanine ligase.